We begin with the raw amino-acid sequence, 384 residues long: Surfeit locus protein 1-like (384 aa).

Transmembrane regions (helical) follow at residues 55 to 75 (ALLWYLVGFTTYGLGETYKFL), 302 to 322 (IPLDYHLYTVLWHWSSLTCFI), and 338 to 358 (IGVEPILIPISILVFICTKIY).

The protein belongs to the SURF1 (TC 3.D.4.8) family.

The protein localises to the mitochondrion inner membrane. In terms of biological role, may be involved in the biogenesis of the COX complex. In Arabidopsis thaliana (Mouse-ear cress), this protein is Surfeit locus protein 1-like.